We begin with the raw amino-acid sequence, 442 residues long: MDRDVLEKFIDLQDKENDIDTKSKIYHEVTDRGSVTPTFNQGSSGMSPKSVGSSGRNKNIQLQLTPTKADPTSTLDSHPLKGDNSDQDDITGNMKENEDDVSLGSGKVTVKNNGNGVSAATNGKGGNQELGIRRSNTWKRKSLIMPLMSPEHTVKQQQRQSYQQHCKPSESVSNTPLGRKYRSKLDRNDGQKSVRSSISSIGSLLPDGATTEFSASPATKLKLPTTTTDTAKVVPSVSEDDNDMESLLQSLANKELEILERTRRVHDLFRQIKIEDKIIKQNAEELQQLKKKVSRLVGNQVQGQNSNTTLPAESHGESNNAETADNKSSSLWTKSVSLLNQFDQIIQGTVETKLGLGDSGSSATENQSEGKPKGDDNAGSAIWSLVNEFKNGLGLLATEEEDADGSIGTIATGLATNMEDYGTRKAESSTQAKEIEMYHYSH.

The segment covering 16-31 (ENDIDTKSKIYHEVTD) has biased composition (basic and acidic residues). Disordered regions lie at residues 16–138 (ENDI…SNTW), 151–194 (EHTV…QKSV), 298–328 (GNQVQGQNSNTTLPAESHGESNNAETADNKS), and 354–379 (LGLGDSGSSATENQSEGKPKGDDNAG). The span at 42 to 55 (GSSGMSPKSVGSSG) shows a compositional bias: low complexity. 3 stretches are compositionally biased toward polar residues: residues 56-76 (RNKNIQLQLTPTKADPTSTLD), 110-121 (VKNNGNGVSAAT), and 155-176 (KQQQRQSYQQHCKPSESVSNTP). The span at 183 to 192 (SKLDRNDGQK) shows a compositional bias: basic and acidic residues. Residues 270 to 300 (RQIKIEDKIIKQNAEELQQLKKKVSRLVGNQ) are a coiled coil.

Belongs to the TDA11 family.

The protein resides in the cytoplasm. The protein is Topoisomerase I damage affected protein 11 (TDA11) of Kluyveromyces lactis (strain ATCC 8585 / CBS 2359 / DSM 70799 / NBRC 1267 / NRRL Y-1140 / WM37) (Yeast).